The primary structure comprises 916 residues: Chitin synthase B (916 aa).

Disordered regions lie at residues 1–75 (MAYH…GYSL) and 118–141 (ARSE…GGNG). Residues 14–26 (HTYDDGHQLRDLS) show a composition bias toward basic and acidic residues. Polar residues predominate over residues 59–75 (RGLTASPVQRPTSGYSL). A run of 7 helical transmembrane segments spans residues 544 to 561 (RWLN…MHFG), 588 to 608 (FLTW…MDLV), 629 to 649 (IINT…FILA), 664 to 684 (SFVA…YLVV), 716 to 736 (IIII…FMYL), 845 to 865 (LVTL…SEGL), and 884 to 904 (ALLW…TWFL).

Belongs to the chitin synthase family. Class III subfamily. As to quaternary structure, interacts with kibesin kinA. Activity requires trypsin activation, suggesting a zymogenic nature. In terms of processing, phosphorylated at yet unidentified residues in a N-terminal disordered region-dependent manner.

The protein localises to the cell membrane. It is found in the cell tip. Its subcellular location is the cell septum. It catalyses the reaction [(1-&gt;4)-N-acetyl-beta-D-glucosaminyl](n) + UDP-N-acetyl-alpha-D-glucosamine = [(1-&gt;4)-N-acetyl-beta-D-glucosaminyl](n+1) + UDP + H(+). Activity is stimulated by Mg(2+) and is inhibited by polyoxin D. Polymerizes chitin, a structural polymer of the cell wall and septum, by transferring the sugar moiety of UDP-GlcNAc to the non-reducing end of the growing chitin polymer. Does not substantially contribute to the rigidity of the cell wall but is necessary for normal hyphal growth and organization. In addition to its functions in the formation of normal cell walls of hyphae, is also involved in conidiophore and conidia development. The sequence is that of Chitin synthase B from Emericella nidulans (strain FGSC A4 / ATCC 38163 / CBS 112.46 / NRRL 194 / M139) (Aspergillus nidulans).